Consider the following 376-residue polypeptide: E3 ubiquitin-protein ligase RNF133 (376 aa).

The 103-residue stretch at 65–167 (SSTLKRVAGV…LKGTEIFHLI (103 aa)) folds into the PA domain. Residues 190–210 (YLVSFVIVTTATLAYFIFYHI) traverse the membrane as a helical segment. Residues 256–297 (CVICFEHYKPNDIVRILTCKHFFHKNCIDPWILSHGTCPICK) form an RING-type; atypical zinc finger. The disordered stretch occupies residues 328–376 (TLSPSEEETNNEVSPAGTSDKVIHVEENPTSQNNDSQPHSVVEDVHPSP). Positions 355–366 (NPTSQNNDSQPH) are enriched in polar residues.

As to quaternary structure, interacts with E3 ligase UBE2J1. Auto-ubiquitinated.

The protein resides in the endoplasmic reticulum membrane. The enzyme catalyses S-ubiquitinyl-[E2 ubiquitin-conjugating enzyme]-L-cysteine + [acceptor protein]-L-lysine = [E2 ubiquitin-conjugating enzyme]-L-cysteine + N(6)-ubiquitinyl-[acceptor protein]-L-lysine.. It functions in the pathway protein modification; protein ubiquitination. Functionally, has E3 ubiquitin-protein ligase activity. Plays a role in male fecundity through the interaction with the E2 ubituitin-protein ligase UBE2J1. This Macaca fascicularis (Crab-eating macaque) protein is E3 ubiquitin-protein ligase RNF133 (RNF133).